The primary structure comprises 647 residues: Macrolide export ATP-binding/permease protein MacB (647 aa).

The ABC transporter domain occupies 6 to 244 (LEISGCYRTF…VDTAVTKINN (239 aa)). Residue 42–49 (GASGSGKS) participates in ATP binding. A run of 4 helical transmembrane segments spans residues 273 to 293 (FLTM…VALG), 522 to 542 (LLIS…VMNI), 577 to 597 (LVCL…GVVF), and 612 to 632 (SIVA…FLPA).

It belongs to the ABC transporter superfamily. Macrolide exporter (TC 3.A.1.122) family. In terms of assembly, homodimer. Part of the tripartite efflux system MacAB-TolC, which is composed of an inner membrane transporter, MacB, a periplasmic membrane fusion protein, MacA, and an outer membrane component, TolC. The complex forms a large protein conduit and can translocate molecules across both the inner and outer membranes. Interacts with MacA.

It localises to the cell inner membrane. Its function is as follows. Part of the tripartite efflux system MacAB-TolC. MacB is a non-canonical ABC transporter that contains transmembrane domains (TMD), which form a pore in the inner membrane, and an ATP-binding domain (NBD), which is responsible for energy generation. Confers resistance against macrolides. The chain is Macrolide export ATP-binding/permease protein MacB from Shewanella sp. (strain W3-18-1).